A 263-amino-acid chain; its full sequence is Putative 2-aminoethylphosphonate transport system permease protein PhnV (263 aa).

6 helical membrane-spanning segments follow: residues 13 to 33, 69 to 89, 104 to 124, 131 to 151, 185 to 205, and 233 to 253; these read GVVASVLFIVFFFLPLAVILM, LTIGFCASLFALLCGVWAALA, VFYLPSAIPSVSVGLGILVAF, MNGTLWIVLTAHFVLISAFTF, LPLLMPWMVSELALSLSLSMG, and NIADGAALTIVLVAITLLLMM. The 189-residue stretch at 65-253 folds into the ABC transmembrane type-1 domain; the sequence is LLASLTIGFC…LVAITLLLMM (189 aa).

The protein belongs to the binding-protein-dependent transport system permease family.

The protein resides in the cell inner membrane. Its function is as follows. Probably part of the PhnSTUV complex (TC 3.A.1.11.5) involved in 2-aminoethylphosphonate import. Probably responsible for the translocation of the substrate across the membrane. This Salmonella typhi protein is Putative 2-aminoethylphosphonate transport system permease protein PhnV (phnV).